A 431-amino-acid chain; its full sequence is D-inositol 3-phosphate glycosyltransferase (431 aa).

H21 contributes to the 1D-myo-inositol 3-phosphate binding site. UDP-N-acetyl-alpha-D-glucosamine contacts are provided by residues 27-28 (QP) and G35. 1D-myo-inositol 3-phosphate is bound by residues 32-37 (DAGGMN), R90, Y123, T147, and R167. 3 residues coordinate UDP-N-acetyl-alpha-D-glucosamine: R241, K246, and Q307. Residues Y316, R317, and A319 each coordinate Mg(2+). Positions 329 and 337 each coordinate UDP-N-acetyl-alpha-D-glucosamine. T343 lines the Mg(2+) pocket.

Belongs to the glycosyltransferase group 1 family. MshA subfamily. As to quaternary structure, homodimer.

The catalysed reaction is 1D-myo-inositol 3-phosphate + UDP-N-acetyl-alpha-D-glucosamine = 1D-myo-inositol 2-acetamido-2-deoxy-alpha-D-glucopyranoside 3-phosphate + UDP + H(+). Catalyzes the transfer of a N-acetyl-glucosamine moiety to 1D-myo-inositol 3-phosphate to produce 1D-myo-inositol 2-acetamido-2-deoxy-glucopyranoside 3-phosphate in the mycothiol biosynthesis pathway. The sequence is that of D-inositol 3-phosphate glycosyltransferase from Saccharomonospora viridis (strain ATCC 15386 / DSM 43017 / JCM 3036 / CCUG 5913 / NBRC 12207 / NCIMB 9602 / P101) (Thermoactinomyces viridis).